Here is a 211-residue protein sequence, read N- to C-terminus: Adenylate kinase (211 aa).

Residue 10–15 (GAGKGT) coordinates ATP. An NMP region spans residues 30–59 (STGGILRAAIQKQTALGKKVQKVVEVGGLV). AMP-binding positions include Thr-31, Arg-36, 57-59 (GLV), 85-88 (GFPR), and Gln-92. Residues 121–158 (GRRVCSACGSSYHVLFAQPKREGVCDRCRGVLVVREDD) are LID. Position 122 (Arg-122) interacts with ATP. Residues Cys-125 and Cys-128 each coordinate Zn(2+). An ATP-binding site is contributed by 131–132 (SY). The Zn(2+) site is built by Cys-145 and Cys-148. Arg-155 and Arg-166 together coordinate AMP. Position 194 (Pro-194) interacts with ATP.

The protein belongs to the adenylate kinase family. In terms of assembly, monomer.

It is found in the cytoplasm. The catalysed reaction is AMP + ATP = 2 ADP. It participates in purine metabolism; AMP biosynthesis via salvage pathway; AMP from ADP: step 1/1. Functionally, catalyzes the reversible transfer of the terminal phosphate group between ATP and AMP. Plays an important role in cellular energy homeostasis and in adenine nucleotide metabolism. This Treponema pallidum (strain Nichols) protein is Adenylate kinase.